A 355-amino-acid polypeptide reads, in one-letter code: Phytoene synthase (355 aa).

This sequence belongs to the phytoene/squalene synthase family. Requires ATP as cofactor. Mn(2+) is required as a cofactor. Mg(2+) serves as cofactor.

The protein operates within carotenoid biosynthesis; phytoene biosynthesis. In terms of biological role, involved in the biosynthesis of carotenoids. Catalyzes the condensation of two molecules of geranylgeranyl diphosphate (GGPP) to give prephytoene diphosphate (PPPP) and the subsequent rearrangement of the cyclopropylcarbinyl intermediate to yield phytoene. This chain is Phytoene synthase (crtB), found in Cereibacter sphaeroides (strain ATCC 17023 / DSM 158 / JCM 6121 / CCUG 31486 / LMG 2827 / NBRC 12203 / NCIMB 8253 / ATH 2.4.1.) (Rhodobacter sphaeroides).